A 508-amino-acid polypeptide reads, in one-letter code: Histidine ammonia-lyase (508 aa).

Positions 139–141 (ASG) form a cross-link, 5-imidazolinone (Ala-Gly). Serine 140 is subject to 2,3-didehydroalanine (Ser).

Belongs to the PAL/histidase family. Post-translationally, contains an active site 4-methylidene-imidazol-5-one (MIO), which is formed autocatalytically by cyclization and dehydration of residues Ala-Ser-Gly.

Its subcellular location is the cytoplasm. It catalyses the reaction L-histidine = trans-urocanate + NH4(+). It functions in the pathway amino-acid degradation; L-histidine degradation into L-glutamate; N-formimidoyl-L-glutamate from L-histidine: step 1/3. This is Histidine ammonia-lyase from Acidiphilium cryptum (strain JF-5).